We begin with the raw amino-acid sequence, 886 residues long: DNA mismatch repair protein MutS (886 aa).

Residue 641–648 coordinates ATP; the sequence is GPNMAGKS.

It belongs to the DNA mismatch repair MutS family.

Functionally, this protein is involved in the repair of mismatches in DNA. It is possible that it carries out the mismatch recognition step. This protein has a weak ATPase activity. This Rickettsia felis (strain ATCC VR-1525 / URRWXCal2) (Rickettsia azadi) protein is DNA mismatch repair protein MutS.